The primary structure comprises 512 residues: GMP synthase [glutamine-hydrolyzing] (512 aa).

In terms of domain architecture, Glutamine amidotransferase type-1 spans 7-197 (LVLVVDFGGQ…LFKVAGLKAD (191 aa)). C84 serves as the catalytic Nucleophile. Residues H171 and E173 contribute to the active site. The GMPS ATP-PPase domain occupies 198–387 (WSMASFAEEK…LGIPHKLVWR (190 aa)). ATP is bound at residue 225-231 (SGGVDSS).

Homodimer.

It catalyses the reaction XMP + L-glutamine + ATP + H2O = GMP + L-glutamate + AMP + diphosphate + 2 H(+). The protein operates within purine metabolism; GMP biosynthesis; GMP from XMP (L-Gln route): step 1/1. In terms of biological role, catalyzes the synthesis of GMP from XMP. The chain is GMP synthase [glutamine-hydrolyzing] from Clostridium novyi (strain NT).